The sequence spans 184 residues: Acetyl-CoA decarbonylase/synthase complex subunit epsilon 1 (184 aa).

This sequence belongs to the CdhB family. Heterotetramer of two alpha and two epsilon subunits. The ACDS complex is made up of alpha, epsilon, beta, gamma and delta subunits with a probable stoichiometry of (alpha(2)epsilon(2))(4)-beta(8)-(gamma(1)delta(1))(8).

Part of a complex that catalyzes the reversible cleavage of acetyl-CoA, allowing autotrophic growth from CO(2). The alpha-epsilon subcomponent functions as a carbon monoxide dehydrogenase. The precise role of the epsilon subunit is unclear; it may have a stabilizing role within the alpha(2)epsilon(2) component and/or be involved in electron transfer to FAD during a potential FAD-mediated CO oxidation. The sequence is that of Acetyl-CoA decarbonylase/synthase complex subunit epsilon 1 (cdhB1) from Archaeoglobus fulgidus (strain ATCC 49558 / DSM 4304 / JCM 9628 / NBRC 100126 / VC-16).